The primary structure comprises 146 residues: Sperm surface protein Sp17 (146 aa).

A compositionally biased stretch (basic and acidic residues) spans 76 to 88; sequence EHESEKCEAEEKS. The disordered stretch occupies residues 76–109; the sequence is EHESEKCEAEEKSQSVTEEETPVLTIDSEDDKDK. Positions 92-108 are enriched in acidic residues; the sequence is TEEETPVLTIDSEDDKD. Positions 110 to 139 constitute an IQ domain; sequence EEMAALKIQAAFRGHLAREDVKKIRTNKAE.

Homodimer. May interact with ROPN1. Post-translationally, the N-terminus is blocked. As to expression, testis- and sperm-specific.

Its subcellular location is the membrane. In terms of biological role, sperm surface zona pellucida binding protein. Helps to bind spermatozoa to the zona pellucida with high affinity. Might function in binding zona pellucida and carbohydrates. This chain is Sperm surface protein Sp17 (SPA17), found in Oryctolagus cuniculus (Rabbit).